The sequence spans 777 residues: Zygote defective protein 12 (777 aa).

Basic and acidic residues-rich tracts occupy residues 1–10 and 18–36; these read MLDLTNKESE and KYED…PFKE. Residues 1 to 36 form a disordered region; that stretch reads MLDLTNKESESSDNGNSKYEDSIDGREVGTSKPFKE. Positions 1–234 are interaction with dli-1; the sequence is MLDLTNKESE…ESSGKLNGNG (234 aa). The Calponin-homology (CH) domain maps to 44-169; it reads QADLADMAVW…VTLAHIGKNA (126 aa). Disordered regions lie at residues 217–242 and 273–292; these read QSEL…RSNA and SFET…DISI. The segment covering 218-235 has biased composition (low complexity); sequence SELNSLSESSGKLNGNGS. 2 coiled-coil regions span residues 236–399 and 425–688; these read SERR…HHVK and NTEL…QENR. A compositionally biased stretch (polar residues) spans 273 to 288; the sequence is SFETAQHDMSSNSESG. The chain crosses the membrane as a helical span at residues 747–767; sequence AMASILVLGFLVFIAWMFINI. The segment at 749–777 is interaction with unc-84; that stretch reads ASILVLGFLVFIAWMFININSALNAPPNA.

Belongs to the hook family. In terms of assembly, homodimer. Interacts with the dynein subunit dli-1 via its N-terminus. May interact with microtubules. Interacts with sut-2. Interacts (via C-terminus) with unc-84 (via C-terminus); the interaction is direct. As to expression, expressed in the syncytial gonad, oocytes, and in all cells during the development of the early embryo.

It localises to the nucleus membrane. Its subcellular location is the cytoplasm. The protein localises to the cytoskeleton. The protein resides in the microtubule organizing center. It is found in the centrosome. Functionally, cytoskeletal linker protein, which is essential for attachment of the centrosome to the nucleus. Required for dynein localization to the nuclear envelope. Forms a LINC (LInker of Nucleoskeleton and Cytoskeleton) complex together with unc-84, that may be involved in DNA damage repair. The sequence is that of Zygote defective protein 12 from Caenorhabditis elegans.